The chain runs to 127 residues: Apolipoprotein C-IV (127 aa).

Positions 1–27 (MSLLRNRLQALPALCLCVLVLACIGAC) are cleaved as a signal peptide. A glycan (N-linked (GlcNAc...) asparagine) is linked at N63.

Belongs to the apolipoprotein C4 family. In terms of tissue distribution, expressed by the liver and secreted in plasma.

It is found in the secreted. Functionally, may participate in lipoprotein metabolism. This chain is Apolipoprotein C-IV (APOC4), found in Homo sapiens (Human).